Consider the following 351-residue polypeptide: Dihydroorotate dehydrogenase (quinone) (351 aa).

FMN-binding positions include alanine 65–lysine 69 and threonine 89. Lysine 69 is a substrate binding site. Residue asparagine 114–phenylalanine 118 participates in substrate binding. Asparagine 150 and asparagine 183 together coordinate FMN. Asparagine 183 is a substrate binding site. Catalysis depends on serine 186, which acts as the Nucleophile. Asparagine 188 contributes to the substrate binding site. FMN is bound by residues lysine 228 and threonine 256. Asparagine 257–threonine 258 serves as a coordination point for substrate. Residues glycine 279, glycine 308, and tyrosine 329–threonine 330 contribute to the FMN site.

Belongs to the dihydroorotate dehydrogenase family. Type 2 subfamily. In terms of assembly, monomer. The cofactor is FMN.

The protein localises to the cell membrane. The catalysed reaction is (S)-dihydroorotate + a quinone = orotate + a quinol. Its pathway is pyrimidine metabolism; UMP biosynthesis via de novo pathway; orotate from (S)-dihydroorotate (quinone route): step 1/1. Catalyzes the conversion of dihydroorotate to orotate with quinone as electron acceptor. In Acidovorax sp. (strain JS42), this protein is Dihydroorotate dehydrogenase (quinone).